A 110-amino-acid chain; its full sequence is Thiosulfate sulfurtransferase GlpE (110 aa).

One can recognise a Rhodanese domain in the interval 17–105; the sequence is RENGAQVVDI…WRSVYPADTS (89 aa). The active-site Cysteine persulfide intermediate is Cys65.

The protein belongs to the GlpE family.

It localises to the cytoplasm. The catalysed reaction is thiosulfate + hydrogen cyanide = thiocyanate + sulfite + 2 H(+). It carries out the reaction thiosulfate + [thioredoxin]-dithiol = [thioredoxin]-disulfide + hydrogen sulfide + sulfite + 2 H(+). In terms of biological role, transferase that catalyzes the transfer of sulfur from thiosulfate to thiophilic acceptors such as cyanide or dithiols. May function in a CysM-independent thiosulfate assimilation pathway by catalyzing the conversion of thiosulfate to sulfite, which can then be used for L-cysteine biosynthesis. This chain is Thiosulfate sulfurtransferase GlpE, found in Pseudomonas paraeruginosa (strain DSM 24068 / PA7) (Pseudomonas aeruginosa (strain PA7)).